Here is a 177-residue protein sequence, read N- to C-terminus: Endoribonuclease YbeY (177 aa).

3 residues coordinate Zn(2+): histidine 118, histidine 122, and histidine 128.

The protein belongs to the endoribonuclease YbeY family. Requires Zn(2+) as cofactor.

The protein resides in the cytoplasm. In terms of biological role, single strand-specific metallo-endoribonuclease involved in late-stage 70S ribosome quality control and in maturation of the 3' terminus of the 16S rRNA. The chain is Endoribonuclease YbeY from Mycobacterium sp. (strain JLS).